Consider the following 166-residue polypeptide: Cofilin-1 (166 aa).

An N-acetylalanine modification is found at A2. Residues S3 and S8 each carry the phosphoserine modification. The ADF-H domain maps to 4–153 (GVAVSDGVIK…KDRCTLAEKL (150 aa)). The residue at position 13 (K13) is an N6-acetyllysine. T25 is subject to Phosphothreonine. The Nuclear localization signal motif lies at 30-34 (KKRKK). S41 is modified (phosphoserine). T63 is modified (phosphothreonine). Y68 is subject to Phosphotyrosine. Position 73 is an N6-acetyllysine (K73). Y82 is subject to Phosphotyrosine. Residue K132 forms a Glycyl lysine isopeptide (Lys-Gly) (interchain with G-Cter in SUMO2) linkage. Y140 carries the phosphotyrosine modification. K144 carries the N6-acetyllysine modification. S156 is subject to Phosphoserine.

This sequence belongs to the actin-binding proteins ADF family. As to quaternary structure, can bind G- and F-actin in a 1:1 ratio of cofilin to actin. It is a major component of intranuclear and cytoplasmic actin rods. Interacts with the subcortical maternal complex (SCMC) via interaction with TLE6 and NLRP5. Interacts with C9orf72. Inactivated by phosphorylation on Ser-3. Phosphorylated on Ser-3 in resting cells. Dephosphorylated by PDXP/chronophin; this restores its activity in promoting actin filament depolymerization. The phosphorylation of Ser-24 may prevent recognition of the nuclear localization signal. Phosphorylated via a ARRB1-RAC1-LIMK1-PAK1 cascade upon active ligand stimulation of atypical chemokine receptor ACKR2. In terms of tissue distribution, widely distributed in various tissues. Not found in skeletal muscle.

The protein localises to the nucleus matrix. Its subcellular location is the cytoplasm. The protein resides in the cytoskeleton. It localises to the cell projection. It is found in the ruffle membrane. The protein localises to the lamellipodium membrane. Its subcellular location is the lamellipodium. The protein resides in the growth cone. It localises to the axon. In terms of biological role, binds to F-actin and exhibits pH-sensitive F-actin depolymerizing activity. In conjunction with the subcortical maternal complex (SCMC), plays an essential role for zygotes to progress beyond the first embryonic cell divisions via regulation of actin dynamics. Required for the centralization of the mitotic spindle and symmetric division of zygotes. Plays a role in the regulation of cell morphology and cytoskeletal organization in epithelial cells. Required for the up-regulation of atypical chemokine receptor ACKR2 from endosomal compartment to cell membrane, increasing its efficiency in chemokine uptake and degradation. Required for neural tube morphogenesis and neural crest cell migration. This is Cofilin-1 (Cfl1) from Mus musculus (Mouse).